We begin with the raw amino-acid sequence, 100 residues long: UPF0125 protein CV_3462 (100 aa).

The protein belongs to the UPF0125 (RnfH) family.

The polypeptide is UPF0125 protein CV_3462 (Chromobacterium violaceum (strain ATCC 12472 / DSM 30191 / JCM 1249 / CCUG 213 / NBRC 12614 / NCIMB 9131 / NCTC 9757 / MK)).